The primary structure comprises 466 residues: MADAASLRAPLCTEQFGSGAPRGCSAAADGSLQWDGARRWGWLSRAPIAKPGQHAGGGGGPWAALTALSGLRSVLLPQGFPDSVSPDYLPYQLWDSVQAFASSLSGSLATQAVLQGLGVGNAKASVSAATSTWLVKDSTGMLGRIILAWWKGSKLDCNAKQWRLFADILNDVAMFLEIMAPMYPIFFTMTVSTSNLAKCIVGVAGGATRAALTMHQARRNNMADVSAKDSSQETVVNLAGLLVSLLMLPLVSDCPSLSLGCFVLLTALHIYANYRAVRALVLETLNESRLQLVLEHFLQRGEVLEPASANQMEPLWTGFWPSLSLSLGVPLHHLVSSVSELKQLVEGHHEPYLLCWNKSRNQVQVALSQEAGPETVLRAATHGLILGALQEDGPLPGELAELRHQVQADPKKESWILVRETHQVLDTLFPKFLKGLQAAGWKTEKHHLEVDEWRATWPLSPEKKVL.

Ala-2 carries the N-acetylalanine modification. Residues Leu-245–Leu-265 form a helical membrane-spanning segment.

This sequence belongs to the RUS1 family.

The protein resides in the membrane. The polypeptide is RUS family member 1 (Mus musculus (Mouse)).